The chain runs to 32 residues: Natriuretic peptide Coa_NP2 (32 aa).

C8 and C24 are oxidised to a cystine.

Belongs to the natriuretic peptide family. Snake NP subfamily. In terms of tissue distribution, expressed by the venom gland.

Its subcellular location is the secreted. Snake venom natriuretic peptide that exhibits hypotensive and vasorelaxant effects. Produces a dose-dependent hypotension in rats, followed by significant increases in concentrations of markers of nitric oxide (NO) formation measured in the plasma and vasorelaxation in a thoracic aortic ring bath. The peptide may exert its hypotensive action, at least in part, through stimulation of NO production. The vasorelaxant effect is endothelium-dependent and does not appear to be mediated by the natriuretic peptide receptor-A, as its action is not modified by isatin (a potent NPR1 antagonist). May act by activating the natriuretic peptide receptor-B (NPR2). The polypeptide is Natriuretic peptide Coa_NP2 (Crotalus lutosus abyssus (Grand Canyon rattlesnake)).